A 354-amino-acid polypeptide reads, in one-letter code: Uptake hydrogenase small subunit (354 aa).

The segment at residues 1–44 (MSQLETXYDVMRRQGITRRSFLKYCSLTGRPCLGPTFAPQIAHA) is a signal peptide (tat-type signal). 8 residues coordinate [4Fe-4S] cluster: C61, C64, C156, C190, H228, S231, C256, and C262. 3 residues coordinate [3Fe-4S] cluster: C271, C290, and C293.

This sequence belongs to the [NiFe]/[NiFeSe] hydrogenase small subunit family. Heterodimer of a large and a small subunit. It depends on [4Fe-4S] cluster as a cofactor. [3Fe-4S] cluster is required as a cofactor. Predicted to be exported by the Tat system. The position of the signal peptide cleavage has not been experimentally proven.

It localises to the cell membrane. The enzyme catalyses H2 + A = AH2. In terms of biological role, this enzyme recycles the H(2) produced by nitrogenase to increase the production of ATP and to protect nitrogenase against inhibition or damage by O(2) under carbon- or phosphate-limited conditions. This is Uptake hydrogenase small subunit (hupA) from Azotobacter chroococcum mcd 1.